A 658-amino-acid polypeptide reads, in one-letter code: Phosphomethylpyrimidine synthase (658 aa).

Residues 1 to 22 (MNNSTDAVNPAKKPQTRREKRE) form a disordered region. Substrate is bound by residues Asn248, Met277, Tyr306, His342, 362 to 364 (SRG), 403 to 406 (DGLR), and Glu442. Zn(2+) is bound at residue His446. Tyr469 lines the substrate pocket. Zn(2+) is bound at residue His510. Residues Cys590, Cys593, and Cys598 each contribute to the [4Fe-4S] cluster site.

The protein belongs to the ThiC family. As to quaternary structure, homodimer. [4Fe-4S] cluster is required as a cofactor.

The enzyme catalyses 5-amino-1-(5-phospho-beta-D-ribosyl)imidazole + S-adenosyl-L-methionine = 4-amino-2-methyl-5-(phosphooxymethyl)pyrimidine + CO + 5'-deoxyadenosine + formate + L-methionine + 3 H(+). The protein operates within cofactor biosynthesis; thiamine diphosphate biosynthesis. Catalyzes the synthesis of the hydroxymethylpyrimidine phosphate (HMP-P) moiety of thiamine from aminoimidazole ribotide (AIR) in a radical S-adenosyl-L-methionine (SAM)-dependent reaction. This Colwellia psychrerythraea (strain 34H / ATCC BAA-681) (Vibrio psychroerythus) protein is Phosphomethylpyrimidine synthase.